Consider the following 379-residue polypeptide: Nucleosome assembly protein 1;2 (379 aa).

Residues 26 to 80 (VNALKNKLQNLAGQHSDVLENLTPPVRKRVEFLREIQNQYDEMEAKFFEERAALE) are a coiled coil. Residue Ser-41 is modified to Phosphoserine. The Nuclear export signal signature appears at 47 to 62 (LTPPVRKRVEFLREIQ). The Nuclear localization signal signature appears at 222-227 (KKKPKK). The interval 298 to 379 (AVEADDLDIE…GERPPECKQQ (82 aa)) is disordered. Residues 299 to 342 (VEADDLDIEDDDDEIDEDDDEEDEEDDEDDEEEDDEDDDEEEEA) are compositionally biased toward acidic residues. A compositionally biased stretch (basic residues) spans 347 to 360 (KSKKKSSAGHKKAG). Cys-376 carries the cysteine methyl ester modification. Cys-376 carries S-farnesyl cysteine lipidation. Residues 377-379 (KQQ) constitute a propeptide, removed in mature form.

It belongs to the nucleosome assembly protein (NAP) family. As to quaternary structure, can form homomeric and heteromeric protein complexes with NAP1;1, NAP1;3 and NAP1;4. Binds histone H2A. Ubiquitous.

The protein resides in the nucleus. It localises to the cytoplasm. May modulate chromatin structure by regulation of nucleosome assembly/disassembly. May function in nucleotide excision repair (NER). Involved in somatic homologous recombination. This is Nucleosome assembly protein 1;2 (NAP1;2) from Arabidopsis thaliana (Mouse-ear cress).